The chain runs to 212 residues: MAKNKDDEESYCGGGGYWDMVEDLEEEICFDAQEVIPNLYIGSISAATCTTSLKEHKITHILSISTNPPKIKEFTTLCINIEDESQKDISSYFQQCHGFIENGRKLGGILVHCSAGVSRSASVVISYLMSVFFKPFWYCMQYLRNIRPCIQPNTGFINQLINYEATILKNQNVISTTTTTTTTTTITKKKLISNDCNNDDNSSGGSGGGMES.

The Tyrosine-protein phosphatase domain maps to 30 to 169 (FDAQEVIPNL…LINYEATILK (140 aa)). Cys-113 serves as the catalytic Phosphocysteine intermediate.

It belongs to the protein-tyrosine phosphatase family. Non-receptor class dual specificity subfamily.

The catalysed reaction is O-phospho-L-tyrosyl-[protein] + H2O = L-tyrosyl-[protein] + phosphate. It catalyses the reaction O-phospho-L-seryl-[protein] + H2O = L-seryl-[protein] + phosphate. The enzyme catalyses O-phospho-L-threonyl-[protein] + H2O = L-threonyl-[protein] + phosphate. Its function is as follows. Has a dual specificity toward Ser/Thr and Tyr-containing proteins. The protein is Probable dual specificity protein phosphatase DDB_G0269404 of Dictyostelium discoideum (Social amoeba).